The sequence spans 236 residues: NEP1-interacting protein 1 (236 aa).

The Lumenal, thylakoid segment spans residues 1-44; the sequence is MASSRFQSGFCPISSCPSLENFIERIKDACRFTLSAVLGTILSA. A helical membrane pass occupies residues 45–65; the sequence is VLTFFFALVGTLLGALTGALI. Residues 66–78 lie on the Stromal side of the membrane; the sequence is GQETESGFIRGAA. A helical membrane pass occupies residues 79-99; it reads VGAISGAVFSIEVFESSLVLW. The Lumenal, thylakoid segment spans residues 100–104; sequence KSNES. The helical transmembrane segment at 105-125 threads the bilayer; it reads RFGCLLYLIDVIVSLISGRLV. Residues 126 to 236 are Stromal-facing; it reads RERIGPAMLS…GSCPMCRRDL (111 aa). An RING-type; atypical zinc finger spans residues 191–233; that stretch reads CSVCLQDFQLGETVRSLPHCHHMFHLPCIDNWLFRHGSCPMCR.

This sequence belongs to the RING-type zinc finger family. NIP subfamily. Interacts with RPOT2.

The protein localises to the plastid. Its subcellular location is the chloroplast thylakoid membrane. In terms of biological role, intrinsic thylakoid membrane protein that fixes RPOT2 on the stromal side of the thylakoid membrane. This Arabidopsis thaliana (Mouse-ear cress) protein is NEP1-interacting protein 1 (NIP1).